A 238-amino-acid polypeptide reads, in one-letter code: Aspartate/glutamate leucyltransferase (238 aa).

The protein belongs to the R-transferase family. Bpt subfamily.

The protein localises to the cytoplasm. It carries out the reaction N-terminal L-glutamyl-[protein] + L-leucyl-tRNA(Leu) = N-terminal L-leucyl-L-glutamyl-[protein] + tRNA(Leu) + H(+). The enzyme catalyses N-terminal L-aspartyl-[protein] + L-leucyl-tRNA(Leu) = N-terminal L-leucyl-L-aspartyl-[protein] + tRNA(Leu) + H(+). In terms of biological role, functions in the N-end rule pathway of protein degradation where it conjugates Leu from its aminoacyl-tRNA to the N-termini of proteins containing an N-terminal aspartate or glutamate. The chain is Aspartate/glutamate leucyltransferase from Aeromonas hydrophila subsp. hydrophila (strain ATCC 7966 / DSM 30187 / BCRC 13018 / CCUG 14551 / JCM 1027 / KCTC 2358 / NCIMB 9240 / NCTC 8049).